We begin with the raw amino-acid sequence, 401 residues long: Phosphoglycerate kinase (401 aa).

Substrate is bound by residues 26 to 28 (DLN), R41, 64 to 67 (HLGR), R123, and R156. ATP contacts are provided by residues K207, G298, E329, and 355 to 358 (GGDS).

The protein belongs to the phosphoglycerate kinase family. As to quaternary structure, monomer.

It is found in the cytoplasm. It catalyses the reaction (2R)-3-phosphoglycerate + ATP = (2R)-3-phospho-glyceroyl phosphate + ADP. It functions in the pathway carbohydrate degradation; glycolysis; pyruvate from D-glyceraldehyde 3-phosphate: step 2/5. This is Phosphoglycerate kinase from Bdellovibrio bacteriovorus (strain ATCC 15356 / DSM 50701 / NCIMB 9529 / HD100).